A 104-amino-acid chain; its full sequence is Ribonuclease P protein component 4 (104 aa).

The Zn(2+) site is built by cysteine 63, cysteine 66, cysteine 89, and cysteine 92.

This sequence belongs to the eukaryotic/archaeal RNase P protein component 4 family. As to quaternary structure, consists of a catalytic RNA component and at least 4-5 protein subunits. The cofactor is Zn(2+).

It is found in the cytoplasm. The catalysed reaction is Endonucleolytic cleavage of RNA, removing 5'-extranucleotides from tRNA precursor.. Its function is as follows. Part of ribonuclease P, a protein complex that generates mature tRNA molecules by cleaving their 5'-ends. This chain is Ribonuclease P protein component 4, found in Methanoregula boonei (strain DSM 21154 / JCM 14090 / 6A8).